The following is a 608-amino-acid chain: 65-kDa microtubule-associated protein 6 (608 aa).

Coiled coils occupy residues 164 to 186, 368 to 388, and 467 to 503; these read DLTL…EKSD, ELLA…QSRK, and VRLV…LLTQ. Positions 501–565 are disordered; sequence LTQRESIYGS…RSYSGHHRQN (65 aa). The segment covering 510 to 523 has biased composition (low complexity); the sequence is SKPSPRRSSSFRKP. S513 is modified (phosphoserine). Over residues 526 to 535 the composition is skewed to polar residues; sequence FNISNGNGSV. S604 is subject to Phosphoserine.

The protein belongs to the MAP65/ASE1 family. As to quaternary structure, forms a dimer. Binds to polymerized centrally located endocytic MT.

The protein resides in the nucleus. The protein localises to the cytoplasm. It is found in the mitochondrion. It localises to the cytoskeleton. Its subcellular location is the phragmoplast. Functionally, microtubule-associated protein that mediates the formation of a mesh-like stable and dense network formed by individual microtubules (MT). Confers MT resistance to high concentration of NaCl. This is 65-kDa microtubule-associated protein 6 (MAP65-6) from Arabidopsis thaliana (Mouse-ear cress).